Reading from the N-terminus, the 583-residue chain is RuBisCO large subunit-binding protein subunit alpha, chloroplastic (583 aa).

Residues 1–14 are compositionally biased toward polar residues; it reads MATANALSSPSVLC. The tract at residues 1-35 is disordered; sequence MATANALSSPSVLCSSRQGKLSGGSQQKGQRVSYR. The N-terminal 45 residues, 1 to 45, are a transit peptide targeting the chloroplast; that stretch reads MATANALSSPSVLCSSRQGKLSGGSQQKGQRVSYRKANRRFSLRA. Positions 15 to 31 are enriched in low complexity; sequence SSRQGKLSGGSQQKGQR. Ser-89 is modified (phosphoserine).

The protein belongs to the chaperonin (HSP60) family. In terms of assembly, oligomer of probably six alpha and six beta subunits.

The protein resides in the plastid. Its subcellular location is the chloroplast. In terms of biological role, this protein binds RuBisCO small and large subunits and is implicated in the assembly of the enzyme oligomer. The sequence is that of RuBisCO large subunit-binding protein subunit alpha, chloroplastic from Brassica napus (Rape).